We begin with the raw amino-acid sequence, 190 residues long: Cypemycin cysteine dehydrogenase (decarboxylating) (190 aa).

The protein belongs to the HFCD (homooligomeric flavin containing Cys decarboxylase) superfamily.

It carries out the reaction [cypemycin](1-18)-L-Cys-L-Leu-L-Val-L-Cys + A = C(3,19),S(21)-[cypemycin](1-18)-L-Ala-L-Leu-N-thioethenyl-L-valinamide + hydrogen sulfide + AH2 + CO2. Functionally, involved in the biosynthesis of the lanaridin cypemycin. The polypeptide is Cypemycin cysteine dehydrogenase (decarboxylating) (Streptomyces sp).